The chain runs to 889 residues: Disease resistance protein UNI (889 aa).

A coiled-coil region spans residues 19–64 (NCLIGKSYIRTLEKNLRALQREMEDLRAIQHEVQNKVARDEARHQR). The interval 131-152 (GNFDEVSQPPPRSEVEERPTQP) is disordered. One can recognise an NB-ARC domain in the interval 137-440 (SQPPPRSEVE…CEGFIGEDQV (304 aa)). 179–186 (GMGGVGKT) contacts ATP. LRR repeat units lie at residues 510–532 (WGAV…ESKC), 533–555 (SELT…FIRY), 557–580 (QKLV…ISGL), 581–603 (VSLQ…LKEL), 604–625 (KKLT…GISR), 626–652 (LLSL…LQQL), 653–676 (QNLQ…LAKL), 698–721 (MENL…ESET), and 825–848 (CPKL…EIHM).

It belongs to the disease resistance NB-LRR family. In terms of assembly, interacts with RPT2A.

Involved in disease resistance via the salicylic acid (SA) signaling pathway. Involved in shoot architecture development via the cytokinin signaling pathway. The sequence is that of Disease resistance protein UNI from Arabidopsis thaliana (Mouse-ear cress).